The sequence spans 283 residues: RNA-binding protein with serine-rich domain 1-B (283 aa).

Disordered stretches follow at residues 1–140 (MAPS…PTKV) and 223–283 (AMPR…NSSR). Basic and acidic residues predominate over residues 10–36 (ERSEDKAKERGKEKAPGKEATDKDRGR). The segment covering 45–103 (ASSGSSSSSRSRSSSSSSSSSGSSSGSSSGSSSSASSRSGSSSSSRSSSSSSSSGSPSP) has biased composition (low complexity). 2 stretches are compositionally biased toward basic residues: residues 104 to 120 (SRRR…KSKQ) and 128 to 140 (RKRR…PTKV). One can recognise an RRM domain in the interval 161–240 (YGKIKMIDMP…PRRMLPPPPM (80 aa)). Residues 244 to 276 (SPPRMRRRSRSPRRRSPVRRRSRSPARRRHRSR) show a composition bias toward basic residues.

It belongs to the splicing factor SR family. As to quaternary structure, component of the active spliceosome.

It is found in the nucleus. Its subcellular location is the nucleus speckle. The protein resides in the cytoplasm. In terms of biological role, component of a splicing-dependent multiprotein exon junction complex (EJC) deposited at splice junction on mRNAs. The EJC is a dynamic structure consisting of a few core proteins and several more peripheral nuclear and cytoplasmic associated factors that join the complex only transiently either during EJC assembly or during subsequent mRNA metabolism. Putative component of the spliceosome which enhances the formation of the ATP-dependent A complex of the spliceosome. May participate in mRNA 3'-end cleavage. Also mediates increase of mRNA abundance and translational efficiency. The polypeptide is RNA-binding protein with serine-rich domain 1-B (rnps1-b) (Xenopus laevis (African clawed frog)).